Consider the following 115-residue polypeptide: Large ribosomal subunit protein bL21 (115 aa).

Belongs to the bacterial ribosomal protein bL21 family. Part of the 50S ribosomal subunit. Contacts protein L20.

Functionally, this protein binds to 23S rRNA in the presence of protein L20. The polypeptide is Large ribosomal subunit protein bL21 (Picosynechococcus sp. (strain ATCC 27264 / PCC 7002 / PR-6) (Agmenellum quadruplicatum)).